The primary structure comprises 1414 residues: DNA-directed RNA polymerase subunit beta'' (1414 aa).

Positions 220, 293, 300, and 303 each coordinate Zn(2+).

Belongs to the RNA polymerase beta' chain family. RpoC2 subfamily. In plastids the minimal PEP RNA polymerase catalytic core is composed of four subunits: alpha, beta, beta', and beta''. When a (nuclear-encoded) sigma factor is associated with the core the holoenzyme is formed, which can initiate transcription. Zn(2+) serves as cofactor.

It localises to the plastid. Its subcellular location is the chloroplast. It catalyses the reaction RNA(n) + a ribonucleoside 5'-triphosphate = RNA(n+1) + diphosphate. Its function is as follows. DNA-dependent RNA polymerase catalyzes the transcription of DNA into RNA using the four ribonucleoside triphosphates as substrates. The polypeptide is DNA-directed RNA polymerase subunit beta'' (Angiopteris evecta (Mule's foot fern)).